Reading from the N-terminus, the 58-residue chain is Photosystem II reaction center protein K (58 aa).

A propeptide spanning residues 1 to 21 (MLNMISTFFDSSSNFSEAFLA) is cleaved from the precursor. A helical transmembrane segment spans residues 29–49 (IFDPIVDVMPIIPVFFLLLAF).

Belongs to the PsbK family. PSII is composed of 1 copy each of membrane proteins PsbA, PsbB, PsbC, PsbD, PsbE, PsbF, PsbH, PsbI, PsbJ, PsbK, PsbL, PsbM, PsbT, PsbX, PsbY, PsbZ, Psb30/Ycf12, at least 3 peripheral proteins of the oxygen-evolving complex and a large number of cofactors. It forms dimeric complexes.

Its subcellular location is the plastid. It is found in the chloroplast thylakoid membrane. Its function is as follows. One of the components of the core complex of photosystem II (PSII). PSII is a light-driven water:plastoquinone oxidoreductase that uses light energy to abstract electrons from H(2)O, generating O(2) and a proton gradient subsequently used for ATP formation. It consists of a core antenna complex that captures photons, and an electron transfer chain that converts photonic excitation into a charge separation. The protein is Photosystem II reaction center protein K of Chaetosphaeridium globosum (Charophycean green alga).